Consider the following 686-residue polypeptide: MIPGKYRSVSGRAANNVNCGLHLVIQTSSLSDKNKVEFRLNRETPPFPGRLLQHDLERNYSSRQGDHISLVSSSMPAFPILQRSSEEKTLYSDRLTLERQKLTVCPIIDGEEHLRLLNFQHNFITRIQNISNLQRLIFLDLYDNQIEEISGLSTLKSLRVLLLGKNRIKKISNLENLKNLDVLDLHGNQITKIENVNHLCDLRVLNLARNLLSHVDNLNGLDSLTELNLRHNQITFVRDVDNLPCLQRLFLSFNNITSFESVSCLAESTSLSDITFDGNPIAQESWYKHTVLQNMMQLRQLDMKRITEEERRVASVVPKKEEEKKRESHKQSLLKEKKRLTINNVARKWDLQQRVANIASTQDRKDSESPPQESCQLDGGNISAFPEEAGSLDAGLSSALQGLSVTETHLVEIDGETLSLYGSGALECLDRNWSVQTAGMVTTVSFTFIEFDEIVQVLPKLKMKFPNSLHLKFRETNLVMLQQFNALAQLRRVDQLTIDPQGNPVVNFTLWKYYVLFRLSHFSMQKINGTEVTQNDMIMAERLFGILAHVASSELPQYRMISILGDARKKQFRYLLESKGKKPGIICEETSDSKRFLGENTNRATLNYTTREFYHEKLEEIKDKKKFCRLYVEDLVKEATAINMKNEALQKLWPQMFIELVRDAVIEIRSKDSYMKLCLQQITDQK.

LRR repeat units lie at residues 113–134 (HLRL…SNLQ), 135–156 (RLIF…STLK), 157–178 (SLRV…ENLK), 179–200 (NLDV…NHLC), 201–222 (DLRV…NGLD), 223–244 (SLTE…DNLP), and 245–266 (CLQR…SCLA). Residues 279-317 (NPIAQESWYKHTVLQNMMQLRQLDMKRITEEERRVASVV) form the LRRCT domain. 2 disordered regions span residues 311–332 (RRVA…HKQS) and 359–381 (ASTQ…DGGN). Positions 319 to 341 (KKEEEKKRESHKQSLLKEKKRLT) form a coiled coil.

In terms of assembly, part of the neuronal tubulin polyglutamylase complex which contains TPGS1, TPGS2, TTLL1, LRRC49 and NICN1. Interacts with PCM1; TTLL1, TPGS1, TPGS2 and LRRC49.

It localises to the cytoplasm. Its subcellular location is the cytoskeleton. The protein localises to the microtubule organizing center. It is found in the centrosome. The protein resides in the centriolar satellite. Its function is as follows. Subunit of the tubulin polyglutamylase complex (TPGC). The complex mediates cilia and flagella polyglutamylation which is essential for their biogenesis and motility. The polypeptide is Leucine-rich repeat-containing protein 49 (Lrrc49) (Mus musculus (Mouse)).